Consider the following 466-residue polypeptide: 55 kDa erythrocyte membrane protein (466 aa).

An N-acetylthreonine modification is found at T2. S19 bears the Phosphoserine mark. Position 49 is a phosphothreonine (T49). A phosphoserine mark is found at S57 and S110. The 82-residue stretch at L71–Q152 folds into the PDZ domain. The SH3 domain maps to A158 to V228. The residue at position 243 (S243) is a Phosphoserine. An interaction with PALS1 region spans residues V268–Y466. Positions R282–D451 constitute a Guanylate kinase-like domain.

Belongs to the MAGUK family. In terms of assembly, heterodimer with PALS1. Interacts with DLG5 and NF2. Interacts (via guanylate kinase-like domain) with WHRN (via third PDZ domain). Interacts with PALS1. Post-translationally, palmitoylated.

It is found in the cell membrane. Its subcellular location is the cell projection. It localises to the stereocilium. Essential regulator of neutrophil polarity. Regulates neutrophil polarization by regulating AKT1 phosphorylation through a mechanism that is independent of PIK3CG activity. The protein is 55 kDa erythrocyte membrane protein (MPP1) of Bos taurus (Bovine).